The chain runs to 365 residues: A-type ATP synthase subunit C (365 aa).

It belongs to the V-ATPase V0D/AC39 subunit family. In terms of assembly, has multiple subunits with at least A(3), B(3), C, D, E, F, H, I and proteolipid K(x).

Its subcellular location is the cell membrane. Its function is as follows. Component of the A-type ATP synthase that produces ATP from ADP in the presence of a proton gradient across the membrane. This chain is A-type ATP synthase subunit C, found in Thermococcus kodakarensis (strain ATCC BAA-918 / JCM 12380 / KOD1) (Pyrococcus kodakaraensis (strain KOD1)).